A 214-amino-acid polypeptide reads, in one-letter code: Putative ras-related protein Rab-5B (214 aa).

56–63 (GEMNTGKT) lines the GTP pocket. The Effector region motif lies at 77–85 (TDSTIGAAF). GTP is bound by residues 103–107 (DTAGQ) and 161–164 (NKVD).

The protein belongs to the small GTPase superfamily. Rab family. This sequence lacks the C-terminal cysteine motifs subject to isoprenylation in other Rab proteins.

The polypeptide is Putative ras-related protein Rab-5B (rab5B) (Dictyostelium discoideum (Social amoeba)).